The chain runs to 234 residues: Urease accessory protein UreG 1 (234 aa).

The disordered stretch occupies residues 1-29 (MTRTPTGVPMHLGHTHDAPAAVSADATRP). Residue 42-49 (GPVGSGKT) coordinates GTP.

The protein belongs to the SIMIBI class G3E GTPase family. UreG subfamily. As to quaternary structure, homodimer. UreD, UreF and UreG form a complex that acts as a GTP-hydrolysis-dependent molecular chaperone, activating the urease apoprotein by helping to assemble the nickel containing metallocenter of UreC. The UreE protein probably delivers the nickel.

It is found in the cytoplasm. In terms of biological role, facilitates the functional incorporation of the urease nickel metallocenter. This process requires GTP hydrolysis, probably effectuated by UreG. The sequence is that of Urease accessory protein UreG 1 from Streptomyces griseus subsp. griseus (strain JCM 4626 / CBS 651.72 / NBRC 13350 / KCC S-0626 / ISP 5235).